We begin with the raw amino-acid sequence, 880 residues long: Valine--tRNA ligase (880 aa).

Positions 47-57 (PNITGKLHLGH) match the 'HIGH' region motif. The 'KMSKS' region signature appears at 526–530 (KMSKS). ATP is bound at residue Lys-529. Residues 810 to 845 (LLDLVDREKELERLNKEKTKLEGEILRVEKKLSNER) adopt a coiled-coil conformation.

The protein belongs to the class-I aminoacyl-tRNA synthetase family. ValS type 1 subfamily. In terms of assembly, monomer.

The protein resides in the cytoplasm. The catalysed reaction is tRNA(Val) + L-valine + ATP = L-valyl-tRNA(Val) + AMP + diphosphate. Functionally, catalyzes the attachment of valine to tRNA(Val). As ValRS can inadvertently accommodate and process structurally similar amino acids such as threonine, to avoid such errors, it has a 'posttransfer' editing activity that hydrolyzes mischarged Thr-tRNA(Val) in a tRNA-dependent manner. This is Valine--tRNA ligase from Clostridium perfringens (strain 13 / Type A).